The following is a 475-amino-acid chain: MPSSASMSHHHSSGLRSSISSTSYRRTFGPPPSLSPGAFSYSSSSRFSSSRLLGSGSPSSSARLGSFRAPRAGALRLPSERLDFSMAEALNQEFLATRSNEKQELQELNDRFANFIEKVRFLEQQNAALRGELSQARGQEPARADQLCQQELRELRRELELLGRERDRVQVERDGLAEDLAALKQRLEEETRKREDAEHNLVLFRKDVDDATLSRLELERKIESLMDEIEFLKKLHEEELRDLQVSVESQQVQQVEVEATVKPELTAALRDIRAQYENIAAKNLQEAEEWYKSKYADLSDAANRNHEALRQAKQEMNESRRQIQSLTCEVDGLRGTNEALLRQLRELEEQFALEAGGYQAGAARLEEELRQLKEEMARHLREYQELLNVKMALDIEIATYRKLLEGEESRISVPVHSFASLSLKTTVPEMEPLQDSHSKKMVLIRTIETRDGEKVVTESQKEQHSDLDKSSIHSY.

The interval Met-1–Ser-42 is disordered. The interval Met-1 to Gln-103 is head. Over residues Gly-14–Arg-26 the composition is skewed to low complexity. Tyr-24 bears the 3'-nitrotyrosine mark. Phosphoserine is present on residues Ser-35 and Ser-57. Residue Ser-66 is modified to Phosphoserine; by PKB/AKT1. In terms of domain architecture, IF rod spans Glu-101–Ile-411. Residues Glu-104–Ala-136 form a coil 1A region. The segment at Arg-137 to Leu-147 is linker 1. The segment at Cys-148–Leu-243 is coil 1B. The segment at Gln-244–Thr-266 is linker 2. The tract at residues Ala-267 to Ser-409 is coil 2. At Tyr-383 the chain carries 3'-nitrotyrosine. Residues Arg-410–Tyr-475 form a tail region. The tract at residues Glu-453–Tyr-475 is disordered. Tyr-475 is modified (phosphotyrosine).

This sequence belongs to the intermediate filament family. Forms homodimers (in vitro). Homopolymerizes into a filamentous network (in vitro). Forms heterodimers with NEFL, NEFM or NEFH (in vitro). Interacts with DST (via C-terminus). Interacts with RAB7A; the interaction is direct. Interacts with PRKCE (via phorbol-ester/DAG-type 2 domain). In terms of processing, phosphorylated; phosphorylation increases after nerve injury in regenerating neurons. Expressed in the sciatic nerve and at very low levels in the central nervous system (at protein level). Expressed in the spinal cord, in the sciatic nerve at the level of the dorsal root ganglion and in trigeminal nerves (at protein level). Expressed in the cranial nerves in the hindbrain, including the sensory and motor trigeminal neurons, the mesencephalic trigeminal neurons, the spinal trigeminal neurons, and in the facial nerve (at protein level). Expressed in the cerebellum, with expression in the inferior cerebellar peduncle and the lateral deep cerebellar nucleus (at protein level). Expressed in vestibulocochlear neurons, such as the anteroventral cochlear nucleus, the dorsal cochlear nucleus, the superficial granule cell layer and the granule cell lamina (at protein level). Expressed in glossopharyngeal, vagal and hypoglossal neurons (at protein level). Expressed in peripheral sensory neurons, in the dorsal root ganglia and the spinal cord, and to a lower extent in motor neurons. Expressed in the optic tract of the central nervous system, especially in the lateral geniculate nucleus and the superior colliculus. Expressed in neurons of the pineal stalk in the cortex. Expressed in the spinal trigeminal tract of the midbrain, in the medulla and in the medial cerebellar peduncle.

The protein localises to the cytoplasm. The protein resides in the cytoskeleton. It localises to the cell projection. It is found in the axon. Its subcellular location is the perikaryon. Functionally, class-III neuronal intermediate filament protein. May form an independent structural network without the involvement of other neurofilaments or may cooperate with the neuronal intermediate filament proteins NEFL, NEFH, NEFM and INA to form filamentous networks. Assembly of the neuronal intermediate filaments may be regulated by RAB7A. Plays a role in the development of unmyelinated sensory neurons. May be involved in axon elongation and axon regeneration after injury. Inhibits neurite extension in type II spiral ganglion neurons in the cochlea. This Mus musculus (Mouse) protein is Peripherin (Prph).